A 143-amino-acid polypeptide reads, in one-letter code: Holo-[acyl-carrier-protein] synthase (143 aa).

Residues Asp-9 and Glu-63 each contribute to the Mg(2+) site.

It belongs to the P-Pant transferase superfamily. AcpS family. Requires Mg(2+) as cofactor.

The protein localises to the cytoplasm. It carries out the reaction apo-[ACP] + CoA = holo-[ACP] + adenosine 3',5'-bisphosphate + H(+). Functionally, transfers the 4'-phosphopantetheine moiety from coenzyme A to a Ser of acyl-carrier-protein. In Burkholderia mallei (strain NCTC 10247), this protein is Holo-[acyl-carrier-protein] synthase.